The primary structure comprises 516 residues: MNQPTSSNNGAIKGVQKIRTLIEGLDEISHGGLPSGRTTLVSGTSGTGKTLLAIQFLYHGIKHFDYPGLFVTFEESPRDIIQNAHSFGWDLQSLVDEGKLFILDASPDPDGQEVVGNFDLSALIERIQYAIRKYNAKLVSIDSVTAVFQQYDAAPVVRREIFRLVARLKHLAVTSIMTTERLDEYGPVARFGVEEFVSDNVVILRNVLEGERRRRTIEILKLRGTTHMKGEYPFTITNDGINIFPLGAMRLTQRSSNARISSGVETLDKMCGGGFFKDSIILATGATGTGKTLLVSKFLEEGCRRGERAILFAYEESRAQLSRNASSWGIDFEEMERKGLLKLLCSYPESAGLEDHLQMIKSEISEFKPSRIAIDSLSALARGVTNNAFRQFVIGVTGYAKQEEITGFFTNTTDQFMGAHSITESHISTITDTILMLQYVEIRGEMSRAINVFKMRGSWHDKGIREYTISEGGAAIKDSFRNYERIISGSPTRIAVDEKSELSRIMRGVQDKTLPE.

2 consecutive KaiC domains span residues 1-244 and 258-516; these read MNQP…INIF and ARIS…TLPE. ATP-binding residues include G46, T47, G48, K49, T50, L51, S86, K221, L222, R223, T225, H227, T237, T287, G288, T289, G290, K291, T292, and L293. Residue T50 participates in Mg(2+) binding. Residue T292 participates in Mg(2+) binding. E315 provides a ligand contact to Mg(2+). W328 contacts ATP. S428 is modified (phosphoserine; by autocatalysis). Position 429 is a phosphothreonine; by autocatalysis (T429). Positions 448, 454, 455, 456, 458, 460, and 462 each coordinate ATP.

The protein belongs to the KaiC family. Homohexamer; hexamerization is dependent on ATP-binding. The KaiABC complex composition changes during the circadian cycle to control KaiC phosphorylation. Complexes KaiC(6), KaiA(2-4):KaiC(6), KaiB(6):KaiC(6) and KaiC(6):KaiB(6):KaiA(12) are among the most important forms, many form cooperatively. KaiC interacts with SasA, activating its autokinase function and leading to RpaA activation. Mg(2+) serves as cofactor. In terms of processing, phosphorylated on serine and threonine residues by autocatalysis. Has a 4 step phosphorylation cycle; the autokinase acts first on Thr-429, then Ser-428. When Ser-428 is modified KaiC switches to an autophosphatase mode, acting first on phospho-Thr-429 then phospho-Ser-428.

The enzyme catalyses L-seryl-[protein] + ATP = O-phospho-L-seryl-[protein] + ADP + H(+). The catalysed reaction is L-threonyl-[protein] + ATP = O-phospho-L-threonyl-[protein] + ADP + H(+). It catalyses the reaction ATP + H2O = ADP + phosphate + H(+). Its activity is regulated as follows. The interaction with KaiA enhances its phosphorylation status, while the interaction with KaiB decreases it. Functionally, central component of the KaiABC oscillator complex, which constitutes the main circadian regulator in cyanobacteria. Complex composition changes during the circadian cycle to control KaiC phosphorylation. KaiA stimulates KaiC autophosphorylation, while KaiB sequesters KaiA, leading to KaiC autodephosphorylation. Clock output pathways impact the RpaA transcriptional regulator. KaiC enhances the autophosphorylation activity of SasA, which then transfers its phosphate group to RpaA to activate it. KaiB and KaiC together enhance the phospho-RpaA dephosphatase activity of CikA. In terms of biological role, has a weak, temperature-independent ATPase activity; ATPase activity defines the circadian period. The phosphorylation state of KaiC modulates its ATPase activity and effects KaiB binding. The sequence is that of Circadian clock oscillator protein KaiC from Picosynechococcus sp. (strain ATCC 27264 / PCC 7002 / PR-6) (Agmenellum quadruplicatum).